Reading from the N-terminus, the 232-residue chain is Uracil phosphoribosyltransferase (232 aa).

A GTP-binding site is contributed by 38-42; sequence KGLVR. Residues Arg87, Arg112, and 140 to 148 contribute to the 5-phospho-alpha-D-ribose 1-diphosphate site; that span reads DPMIATGST. Uracil contacts are provided by residues Ile204 and 209 to 211; that span reads GDA. Residue Asp210 participates in 5-phospho-alpha-D-ribose 1-diphosphate binding.

This sequence belongs to the UPRTase family. The cofactor is Mg(2+).

The enzyme catalyses UMP + diphosphate = 5-phospho-alpha-D-ribose 1-diphosphate + uracil. The protein operates within pyrimidine metabolism; UMP biosynthesis via salvage pathway; UMP from uracil: step 1/1. With respect to regulation, allosterically activated by GTP. Catalyzes the conversion of uracil and 5-phospho-alpha-D-ribose 1-diphosphate (PRPP) to UMP and diphosphate. This Methanococcus vannielii (strain ATCC 35089 / DSM 1224 / JCM 13029 / OCM 148 / SB) protein is Uracil phosphoribosyltransferase.